A 786-amino-acid polypeptide reads, in one-letter code: LPS-assembly protein LptD (786 aa).

A signal peptide spans 1 to 24 (MKKRIPTLLATMIASALYSHQGLA). Cystine bridges form between Cys31–Cys726 and Cys173–Cys727.

The protein belongs to the LptD family. In terms of assembly, component of the lipopolysaccharide transport and assembly complex. Interacts with LptE and LptA. Post-translationally, contains two intramolecular disulfide bonds.

The protein localises to the cell outer membrane. Functionally, together with LptE, is involved in the assembly of lipopolysaccharide (LPS) at the surface of the outer membrane. This chain is LPS-assembly protein LptD, found in Salmonella typhimurium (strain LT2 / SGSC1412 / ATCC 700720).